We begin with the raw amino-acid sequence, 83 residues long: Exodeoxyribonuclease 7 small subunit (83 aa).

The interval 1–25 (MQDELFETEKAPPKNAKNAPKKSFE) is disordered.

This sequence belongs to the XseB family. Heterooligomer composed of large and small subunits.

The protein localises to the cytoplasm. It carries out the reaction Exonucleolytic cleavage in either 5'- to 3'- or 3'- to 5'-direction to yield nucleoside 5'-phosphates.. Its function is as follows. Bidirectionally degrades single-stranded DNA into large acid-insoluble oligonucleotides, which are then degraded further into small acid-soluble oligonucleotides. The polypeptide is Exodeoxyribonuclease 7 small subunit (Helicobacter pylori (strain P12)).